The sequence spans 481 residues: Proline--tRNA ligase (481 aa).

The protein belongs to the class-II aminoacyl-tRNA synthetase family. ProS type 3 subfamily. In terms of assembly, homodimer.

The protein localises to the cytoplasm. It catalyses the reaction tRNA(Pro) + L-proline + ATP = L-prolyl-tRNA(Pro) + AMP + diphosphate. Functionally, catalyzes the attachment of proline to tRNA(Pro) in a two-step reaction: proline is first activated by ATP to form Pro-AMP and then transferred to the acceptor end of tRNA(Pro). This chain is Proline--tRNA ligase, found in Chlorobium limicola (strain DSM 245 / NBRC 103803 / 6330).